The sequence spans 70 residues: Neuropeptide SIFamide (70 aa).

The first 22 residues, 1–22, serve as a signal peptide directing secretion; that stretch reads MRFIVALCLFAIVMCIIHKAEG. Phe-34 carries the post-translational modification Phenylalanine amide. The propeptide occupies 38–70; it reads GVVEYDTTGRALSALCEIASETCQAWYQTLENK.

In terms of tissue distribution, expressed in antennal lobe (AL) and gnathal ganglion (GNG) with expression detected in most animals (at protein level). Not expressed in corpora cardiaca (CC) and corpora allata (CA) (at protein level).

Its subcellular location is the secreted. Ligand for the neuropeptide SIFamide receptor. In Agrotis ipsilon (Black cutworm moth), this protein is Neuropeptide SIFamide.